A 217-amino-acid chain; its full sequence is 3,4-dihydroxy-2-butanone 4-phosphate synthase (217 aa).

D-ribulose 5-phosphate is bound by residues arginine 37–glutamate 38, aspartate 42, arginine 150–threonine 154, and glutamate 174. Mg(2+) is bound at residue glutamate 38. Residue histidine 153 coordinates Mg(2+).

Belongs to the DHBP synthase family. As to quaternary structure, homodimer. The cofactor is Mg(2+). Mn(2+) is required as a cofactor.

The catalysed reaction is D-ribulose 5-phosphate = (2S)-2-hydroxy-3-oxobutyl phosphate + formate + H(+). It functions in the pathway cofactor biosynthesis; riboflavin biosynthesis; 2-hydroxy-3-oxobutyl phosphate from D-ribulose 5-phosphate: step 1/1. Catalyzes the conversion of D-ribulose 5-phosphate to formate and 3,4-dihydroxy-2-butanone 4-phosphate. This chain is 3,4-dihydroxy-2-butanone 4-phosphate synthase, found in Shewanella oneidensis (strain ATCC 700550 / JCM 31522 / CIP 106686 / LMG 19005 / NCIMB 14063 / MR-1).